A 129-amino-acid polypeptide reads, in one-letter code: Small ribosomal subunit protein uS8 (129 aa).

This sequence belongs to the universal ribosomal protein uS8 family. As to quaternary structure, part of the 30S ribosomal subunit.

In terms of biological role, one of the primary rRNA binding proteins, it binds directly to 16S rRNA central domain where it helps coordinate assembly of the platform of the 30S subunit. The chain is Small ribosomal subunit protein uS8 from Thermoplasma volcanium (strain ATCC 51530 / DSM 4299 / JCM 9571 / NBRC 15438 / GSS1).